We begin with the raw amino-acid sequence, 103 residues long: Pyrimidine/purine nucleoside phosphorylase (103 aa).

It belongs to the nucleoside phosphorylase PpnP family.

The enzyme catalyses a purine D-ribonucleoside + phosphate = a purine nucleobase + alpha-D-ribose 1-phosphate. The catalysed reaction is adenosine + phosphate = alpha-D-ribose 1-phosphate + adenine. It catalyses the reaction cytidine + phosphate = cytosine + alpha-D-ribose 1-phosphate. It carries out the reaction guanosine + phosphate = alpha-D-ribose 1-phosphate + guanine. The enzyme catalyses inosine + phosphate = alpha-D-ribose 1-phosphate + hypoxanthine. The catalysed reaction is thymidine + phosphate = 2-deoxy-alpha-D-ribose 1-phosphate + thymine. It catalyses the reaction uridine + phosphate = alpha-D-ribose 1-phosphate + uracil. It carries out the reaction xanthosine + phosphate = alpha-D-ribose 1-phosphate + xanthine. Its function is as follows. Catalyzes the phosphorolysis of diverse nucleosides, yielding D-ribose 1-phosphate and the respective free bases. Can use uridine, adenosine, guanosine, cytidine, thymidine, inosine and xanthosine as substrates. Also catalyzes the reverse reactions. The sequence is that of Pyrimidine/purine nucleoside phosphorylase from Laribacter hongkongensis (strain HLHK9).